A 489-amino-acid polypeptide reads, in one-letter code: F-box/LRR-repeat protein 7 (489 aa).

Residues 1–31 show a composition bias toward low complexity; that stretch reads MGANNGKQSGSEGKGSSSISSDLSSSTDQTS. A disordered region spans residues 1–76; that stretch reads MGANNGKQSG…AVLNGSSTSS (76 aa). A compositionally biased stretch (polar residues) spans 32–55; sequence TKAPKNAATSEDSDLSMRTVSTPS. A compositionally biased stretch (low complexity) spans 64-76; that stretch reads SSSAVLNGSSTSS. The F-box domain maps to 109–155; it reads GAPVDILPDHAFLQIFTHLPTNQLCRCARVCRRWYNLAWDPRLWRTI. LRR repeat units follow at residues 168–193, 194–219, 220–245, 251–279, 280–305, 306–331, 332–357, 358–383, 384–409, 410–435, and 436–461; these read LRVL…MVSG, CRRL…EVAG, CYNV…DVSG, CISL…DMTD, CFAL…YLRR, CVRL…SVSD, CRFI…SIAH, CSRI…NARG, CEGL…DIGK, CPLV…SLKS, and CESI…NVQD.

The protein belongs to the FBXL7 family. In terms of assembly, part of the SCF (SKP1-CUL1-F-box) E3 ubiquitin-protein ligase complex SCF(FBXL7).

It localises to the cytoplasm. The protein localises to the cytoskeleton. Its subcellular location is the microtubule organizing center. The protein resides in the centrosome. The protein operates within protein modification; protein ubiquitination. In terms of biological role, substrate recognition component of a SCF (SKP1-CUL1-F-box protein) E3 ubiquitin-protein ligase complex which mediates the ubiquitination and subsequent proteasomal degradation of target proteins. The chain is F-box/LRR-repeat protein 7 (fbxl7) from Danio rerio (Zebrafish).